A 442-amino-acid chain; its full sequence is tRNA modification GTPase MnmE (442 aa).

Residues R27, E84, and K124 each coordinate (6S)-5-formyl-5,6,7,8-tetrahydrofolate. The TrmE-type G domain occupies 221–366 (GLHVVIVGAP…LLDALQAFAE (146 aa)). GTP contacts are provided by residues 231-236 (NAGKSS), 250-256 (SEEAGTT), and 275-278 (DTAG). S235 and T256 together coordinate Mg(2+). Residue K442 coordinates (6S)-5-formyl-5,6,7,8-tetrahydrofolate.

Belongs to the TRAFAC class TrmE-Era-EngA-EngB-Septin-like GTPase superfamily. TrmE GTPase family. In terms of assembly, homodimer. Heterotetramer of two MnmE and two MnmG subunits. K(+) is required as a cofactor.

Its subcellular location is the cytoplasm. Functionally, exhibits a very high intrinsic GTPase hydrolysis rate. Involved in the addition of a carboxymethylaminomethyl (cmnm) group at the wobble position (U34) of certain tRNAs, forming tRNA-cmnm(5)s(2)U34. The sequence is that of tRNA modification GTPase MnmE from Brucella melitensis biotype 1 (strain ATCC 23456 / CCUG 17765 / NCTC 10094 / 16M).